The following is a 336-amino-acid chain: Probable allantoicase (336 aa).

It belongs to the allantoicase family.

The catalysed reaction is allantoate + H2O = (S)-ureidoglycolate + urea. It functions in the pathway nitrogen metabolism; (S)-allantoin degradation; (S)-ureidoglycolate from allantoate (aminidohydrolase route): step 1/1. This Ralstonia nicotianae (strain ATCC BAA-1114 / GMI1000) (Ralstonia solanacearum) protein is Probable allantoicase.